A 270-amino-acid chain; its full sequence is Diaminopimelate epimerase (270 aa).

Substrate-binding residues include Asn-15, Gln-49, and Asn-66. Catalysis depends on Cys-75, which acts as the Proton donor. Residues 76–77 (GN), Asn-155, Asn-187, and 204–205 (ER) contribute to the substrate site. The active-site Proton acceptor is Cys-213. 214-215 (GS) contacts substrate.

It belongs to the diaminopimelate epimerase family. As to quaternary structure, homodimer.

It localises to the cytoplasm. The enzyme catalyses (2S,6S)-2,6-diaminopimelate = meso-2,6-diaminopimelate. It functions in the pathway amino-acid biosynthesis; L-lysine biosynthesis via DAP pathway; DL-2,6-diaminopimelate from LL-2,6-diaminopimelate: step 1/1. Functionally, catalyzes the stereoinversion of LL-2,6-diaminopimelate (L,L-DAP) to meso-diaminopimelate (meso-DAP), a precursor of L-lysine and an essential component of the bacterial peptidoglycan. The sequence is that of Diaminopimelate epimerase from Rickettsia prowazekii (strain Madrid E).